The sequence spans 704 residues: Urea-proton symporter DUR3 (704 aa).

15 helical membrane-spanning segments follow: residues 39–59 (YAVI…LVWL), 80–100 (VKTG…ATIL), 115–135 (FWYA…AIEI), 159–179 (IVFL…LLLG), 192–212 (LYAA…AGGL), 216–236 (FLAS…FVFL), 291–311 (SSGG…TVFV), 336–356 (LVWF…ALAL), 388–408 (LTML…AVSS), 435–455 (AVLG…KAGV), 461–481 (YLAM…MLLW), 486–506 (AFGA…TWLT), 527–547 (LAGN…CSLV), 590–610 (AWIV…WPVL), and 622–642 (FWFW…VIIG).

This sequence belongs to the sodium:solute symporter (SSF) (TC 2.A.21) family. In terms of tissue distribution, expressed in root rhizodermis, including root hairs and cortex in more basal root zones. Expressed in shoots.

It localises to the cell membrane. Functionally, high-affinity urea-proton symporter involved in the active transport of urea across the plasma membrane into root cells. May play an important role in urea uptake by plant cells at low external urea concentrations. The chain is Urea-proton symporter DUR3 (DUR3) from Arabidopsis thaliana (Mouse-ear cress).